Consider the following 314-residue polypeptide: Porphobilinogen deaminase (314 aa).

An S-(dipyrrolylmethanemethyl)cysteine modification is found at Cys-234.

The protein belongs to the HMBS family. In terms of assembly, monomer. It depends on dipyrromethane as a cofactor.

It catalyses the reaction 4 porphobilinogen + H2O = hydroxymethylbilane + 4 NH4(+). It participates in porphyrin-containing compound metabolism; protoporphyrin-IX biosynthesis; coproporphyrinogen-III from 5-aminolevulinate: step 2/4. In terms of biological role, tetrapolymerization of the monopyrrole PBG into the hydroxymethylbilane pre-uroporphyrinogen in several discrete steps. This chain is Porphobilinogen deaminase, found in Mycobacterium marinum (strain ATCC BAA-535 / M).